The chain runs to 481 residues: Glutamyl-tRNA(Gln) amidotransferase subunit A (481 aa).

Residues lysine 78 and serine 153 each act as charge relay system in the active site. Serine 177 (acyl-ester intermediate) is an active-site residue.

It belongs to the amidase family. GatA subfamily. Heterotrimer of A, B and C subunits.

It carries out the reaction L-glutamyl-tRNA(Gln) + L-glutamine + ATP + H2O = L-glutaminyl-tRNA(Gln) + L-glutamate + ADP + phosphate + H(+). Its function is as follows. Allows the formation of correctly charged Gln-tRNA(Gln) through the transamidation of misacylated Glu-tRNA(Gln) in organisms which lack glutaminyl-tRNA synthetase. The reaction takes place in the presence of glutamine and ATP through an activated gamma-phospho-Glu-tRNA(Gln). This is Glutamyl-tRNA(Gln) amidotransferase subunit A from Borreliella afzelii (strain PKo) (Borrelia afzelii).